The sequence spans 612 residues: MPEAPKIAALEVSDESLAEKNKNKLQFIEDVTTNADDVQRRVLEEILSRNADVEYLKRHGLEGRTDRETFKHIMPVVTYEDIQPEINRIANGDKSQVLCSNPISEFLTSSGTSGGERKLMPTIEEELDRRSLLYSLLMPVMDQFVPGLDKGKGMYFLFIKSESKTPGGLPARPVLTSYYKSSHFKNRPYDPYTNYTSPNQTILCSDSYQSMYSQMLCGLCQHKEVLRVGAVFASGFIRAIKFLEKHWPELARDIRTGTLSSEITDSSVREAVGEILKPDPKLADFVESECRKTSWQGIITRLWPNTKYVDVIVTGTMSQYIPTLDYYSNGLPLVCTMYASSECYFGVNLRPLCKPSEVSYTLIPNMAYFEFLPVHRNSGVTSSISLPKALTEKEQQELVDLVDVKLGQEYELVVTTYAGLYRYRVGDVLSVAGFKNNAPQFSFICRKNVVLSIDSDKTDEVELQNAVKNAVTHLVPFDASLSEYTSYADTSSIPGHYVLFWELCLNGNTPIPPSVFEDCCLTIEESLNSVYRQGRVSDKSIGPLEIKMVESGTFDKLMDYAISLGASINQYKTPRCVKFAPIIELLNSRVVDSYFSPKCPKWSPGHKQWGSN.

This sequence belongs to the IAA-amido conjugating enzyme family. Expressed in cotyledons, stipules, true leaves, hypocotyls, and all parts of the roots. Not detected in flowers.

Functionally, catalyzes the synthesis of indole-3-acetic acid (IAA)-amino acid conjugates, providing a mechanism for the plant to cope with the presence of excess auxin. Strongly reactive with Glu, Gln, Trp, Asp, Ala, Leu, Phe, Gly, Tyr, Met, Ile and Val. Little or no product formation with His, Ser, Thr, Arg, Lys, or Cys. Also active on pyruvic and butyric acid analogs of IAA, PAA and the synthetic auxin naphthaleneacetic acid (NAA). The two chlorinated synthetic auxin herbicides 2,4-D and 3,6-dichloro-o-anisic acid (dicamba) cannot be used as substrates. Involved in auxin signal transduction. Inhibits shoot and hypocotyl cell elongation, and lateral root cell differentiation in light. The chain is Indole-3-acetic acid-amido synthetase GH3.6 (GH3.6) from Arabidopsis thaliana (Mouse-ear cress).